Consider the following 235-residue polypeptide: Phosphoribosylaminoimidazole-succinocarboxamide synthase (235 aa).

Belongs to the SAICAR synthetase family.

It catalyses the reaction 5-amino-1-(5-phospho-D-ribosyl)imidazole-4-carboxylate + L-aspartate + ATP = (2S)-2-[5-amino-1-(5-phospho-beta-D-ribosyl)imidazole-4-carboxamido]succinate + ADP + phosphate + 2 H(+). It functions in the pathway purine metabolism; IMP biosynthesis via de novo pathway; 5-amino-1-(5-phospho-D-ribosyl)imidazole-4-carboxamide from 5-amino-1-(5-phospho-D-ribosyl)imidazole-4-carboxylate: step 1/2. This is Phosphoribosylaminoimidazole-succinocarboxamide synthase from Streptococcus thermophilus (strain ATCC BAA-250 / LMG 18311).